Reading from the N-terminus, the 237-residue chain is Ribosomal RNA small subunit methyltransferase G (237 aa).

Residues Gly78, Phe83, 129-130 (AE), and Arg146 each bind S-adenosyl-L-methionine.

The protein belongs to the methyltransferase superfamily. RNA methyltransferase RsmG family.

The protein localises to the cytoplasm. Functionally, specifically methylates the N7 position of a guanine in 16S rRNA. The chain is Ribosomal RNA small subunit methyltransferase G from Mesoplasma florum (strain ATCC 33453 / NBRC 100688 / NCTC 11704 / L1) (Acholeplasma florum).